The primary structure comprises 446 residues: MAANVNVMAAPTPARPRAWWSHLYVQVLAAIVAGVLLGHFWPAIGTELKPLGDGFIKLVKMIIAPVIFLTVATGIASIGGETKALGRVVGKAFAYFLFFSTLALIVGLVVANVVQPGAGMNIDPATLDAGAVAQYQAKAHEATLTAFLLDIIPVTFVSALTEGSILQALFVAILFGLALSHAGEPGRQVLGLLEKVSTVFFGLVGMLMKFAPIGAFGAMAFTIGKYGVESLANLGLLIATFYLTSLFFVIVILGAVAHFSGFSIFRLIAYLKAELLLVLGTSSSEAALPSLIEKLEKAGCAKPIVGLVVPTGYSFNLDGTNIYMTLAALFIAQAVGVDLSLGDQIALLLVAMVSSKGAAGVTGAGFITLAATLSIVPSVPVAGLALILGIDRFMSECRALTNFIGNALAAIVVAGWEKGLDREALARALAGEPAPLAAAPIETDTD.

9 consecutive transmembrane segments (helical) span residues V25–G45, L58–I78, F93–V113, A159–L179, V199–M219, L236–V256, I322–G342, A370–I390, and L400–L420.

Belongs to the dicarboxylate/amino acid:cation symporter (DAACS) (TC 2.A.23) family.

It localises to the cell inner membrane. In terms of biological role, responsible for the transport of dicarboxylates such as succinate, fumarate, and malate from the periplasm across the membrane. The sequence is that of C4-dicarboxylate transport protein from Sphingopyxis alaskensis (strain DSM 13593 / LMG 18877 / RB2256) (Sphingomonas alaskensis).